Here is a 424-residue protein sequence, read N- to C-terminus: Serine--tRNA ligase (424 aa).

232 to 234 lines the L-serine pocket; it reads TAE. 263-265 contributes to the ATP binding site; that stretch reads RQE. Residue Glu-286 participates in L-serine binding. ATP is bound at residue 350–353; it reads EIGS. Ser-386 contributes to the L-serine binding site.

Belongs to the class-II aminoacyl-tRNA synthetase family. Type-1 seryl-tRNA synthetase subfamily. In terms of assembly, homodimer. The tRNA molecule binds across the dimer.

The protein resides in the cytoplasm. The catalysed reaction is tRNA(Ser) + L-serine + ATP = L-seryl-tRNA(Ser) + AMP + diphosphate + H(+). It carries out the reaction tRNA(Sec) + L-serine + ATP = L-seryl-tRNA(Sec) + AMP + diphosphate + H(+). The protein operates within aminoacyl-tRNA biosynthesis; selenocysteinyl-tRNA(Sec) biosynthesis; L-seryl-tRNA(Sec) from L-serine and tRNA(Sec): step 1/1. Catalyzes the attachment of serine to tRNA(Ser). Is also able to aminoacylate tRNA(Sec) with serine, to form the misacylated tRNA L-seryl-tRNA(Sec), which will be further converted into selenocysteinyl-tRNA(Sec). The chain is Serine--tRNA ligase from Onion yellows phytoplasma (strain OY-M).